The sequence spans 338 residues: MISNFGHIVKTYLSNFPKDDYPVLDTFKFVSIWLGLVLDQSQTSMRSMFKRLNLRGETVDISTFSKASKKRDVGVFREIIFSLKKELSKRKEIKQGELEIFPLDSTIVSITSKLMWNLGFHQVKVFSGINLSTGIPGGIVIHFGQGHDNKYGNETIEETPENGVAVMDRGFCDLQRIKRLQKENNKYHVLRIKNNIKLEKLANDNYMVGTGKNKIESRVVIFTHDNSEFRLVTNLPIESKEIEGVSDEKIAEIYKKRWQIELLWKFLKMHLKLNRLIAKNENAIGIQIYTCIIAYLILKLLVIPKEAGTTMLDKLRYLQAFMCEKISYVHWLRELALR.

It belongs to the transposase 11 family.

The polypeptide is Putative transposase for insertion sequence element IS4SA (Synechocystis sp. (strain ATCC 27184 / PCC 6803 / Kazusa)).